The following is a 475-amino-acid chain: tRNA (guanine(37)-N(1))-methyltransferase (475 aa).

S-adenosyl-L-methionine contacts are provided by residues His-219, 258-259 (DL), and 286-287 (DG). The segment at 306–328 (KITKQKPTSNDKKRNRKVESPTV) is disordered. Residue Asn-349 participates in S-adenosyl-L-methionine binding. Positions 456-469 (NLVSQSDVSKSSDN) are enriched in polar residues. The tract at residues 456–475 (NLVSQSDVSKSSDNILEKDT) is disordered.

This sequence belongs to the class I-like SAM-binding methyltransferase superfamily. TRM5/TYW2 family. As to quaternary structure, monomer.

The protein localises to the mitochondrion matrix. The protein resides in the nucleus. It is found in the cytoplasm. The enzyme catalyses guanosine(37) in tRNA + S-adenosyl-L-methionine = N(1)-methylguanosine(37) in tRNA + S-adenosyl-L-homocysteine + H(+). In terms of biological role, specifically methylates the N1 position of guanosine-37 in various cytoplasmic and mitochondrial tRNAs. Methylation is not dependent on the nature of the nucleoside 5' of the target nucleoside. This is the first step in the biosynthesis of wybutosine (yW), a modified base adjacent to the anticodon of tRNAs and required for accurate decoding. In Batrachochytrium dendrobatidis (strain JAM81 / FGSC 10211) (Frog chytrid fungus), this protein is tRNA (guanine(37)-N(1))-methyltransferase.